Consider the following 85-residue polypeptide: uncharacterized protein (85 aa).

This is an uncharacterized protein from Mycobacterium tuberculosis (strain CDC 1551 / Oshkosh).